We begin with the raw amino-acid sequence, 677 residues long: Beta-galactosidase BgaA (677 aa).

Position 112 (Arg112) interacts with substrate. Cys116 provides a ligand contact to Zn(2+). Residue Asn150 coordinates substrate. The active-site Proton donor is Glu151. Zn(2+) is bound by residues Cys156, Cys158, and Cys161. Glu309 serves as the catalytic Nucleophile. Residues Trp317 and 357 to 360 contribute to the substrate site; that span reads EKYH.

It belongs to the glycosyl hydrolase 42 family. As to quaternary structure, dimer.

The catalysed reaction is Hydrolysis of terminal non-reducing beta-D-galactose residues in beta-D-galactosides.. With respect to regulation, no activity is lost during treatment with 20 or 100 mM EDTA in Z buffer for 3 hours at 0 degrees Celsius, nor is activity greatly stimulated by the addition of cations. Inhibited by 1 mM zinc and 1 mM copper, the levels of activity decrease to 10% of the untreated control. Nickel, cobalt and manganese at concentrations of 10 mM decrease enzyme activity to either 40% (for nickel and cobalt) or 60% (for manganese) of the activity in untreated controls. No change in enzyme activity in the presence of calcium and magnesium at concentrations up to 50 mM. EDTA-treated enzyme exhibits a slight increase in relative specific activity when it is assayed in the presence of 50 mM NaCl or 50 mM KCl, it does not exhibit enhanced activity at concentrations greater than 250 mM. Maintains between 20 and 40% of activity in the presence of 4 M NaCl or 4 M KCl, and it is more active in the presence of KCl than in the presence of NaCl. Retains 50% of activity in the presence of 3 M KCl or 2.5 M NaCl. Functionally, hydrolyzes o-nitrophenyl-beta-D-galactopyranoside (ONPG), p-nitrophenyl-beta-D-galactopyranoside (PNPG), 5-bromo-4-chloro-3-indoyl-beta-D-galactosde (X-gal), o-nitrophenyl-beta-D-fucopyranoside (ONPF) and p-nitrophenyl-beta-D-fucopyranoside (PNPF) with greatest activity towards ONPG and PNPG and low levels of activity with ONPF and PNPF. Detectable, but very low levels of activity towards p-nitrophenyl-beta-lactose (PNPL), p-nitrophenyl-beta-cellobiose (PNPC), p-nitrophenyl-alpha-galactopyranoside (PNP-alpha-G), and p-nitrophenyl-beta-xylopyranoside (PNPX). The chain is Beta-galactosidase BgaA from Planococcus sp. (strain 'SOS Orange').